Reading from the N-terminus, the 373-residue chain is Phospho-N-acetylmuramoyl-pentapeptide-transferase (373 aa).

A run of 10 helical transmembrane segments spans residues 28–48 (LLTVITSLAFSIILGPRTIAY), 72–92 (TPTMGGVLILTSIGFSTLCWA), 94–114 (LANPYVWILMVVMVIFGAVGW), 135–155 (YFWLSVGALFVGSSLYYIASQ), 177–197 (IVPLSALPLGLGFIIFTYFVI), 212–232 (GLAILPVVFVAAGLGVFSYVS), 252–272 (VTIVCAAMIGSGLGFLWYNAH), 276–296 (VFMGDVGALALGAMLGTIAVM), 301–321 (IAFAIMGGLFVAEALSVILQV), and 350–370 (QVVVRFWIIAILLVVLGLMTL).

The protein belongs to the glycosyltransferase 4 family. MraY subfamily. Mg(2+) serves as cofactor.

The protein localises to the cell inner membrane. The catalysed reaction is UDP-N-acetyl-alpha-D-muramoyl-L-alanyl-gamma-D-glutamyl-meso-2,6-diaminopimeloyl-D-alanyl-D-alanine + di-trans,octa-cis-undecaprenyl phosphate = di-trans,octa-cis-undecaprenyl diphospho-N-acetyl-alpha-D-muramoyl-L-alanyl-D-glutamyl-meso-2,6-diaminopimeloyl-D-alanyl-D-alanine + UMP. It participates in cell wall biogenesis; peptidoglycan biosynthesis. Functionally, catalyzes the initial step of the lipid cycle reactions in the biosynthesis of the cell wall peptidoglycan: transfers peptidoglycan precursor phospho-MurNAc-pentapeptide from UDP-MurNAc-pentapeptide onto the lipid carrier undecaprenyl phosphate, yielding undecaprenyl-pyrophosphoryl-MurNAc-pentapeptide, known as lipid I. The chain is Phospho-N-acetylmuramoyl-pentapeptide-transferase from Psychrobacter sp. (strain PRwf-1).